The primary structure comprises 288 residues: Bifunctional protein FolD (288 aa).

NADP(+) is bound by residues glycine 166–serine 168 and isoleucine 232.

Belongs to the tetrahydrofolate dehydrogenase/cyclohydrolase family. In terms of assembly, homodimer.

The catalysed reaction is (6R)-5,10-methylene-5,6,7,8-tetrahydrofolate + NADP(+) = (6R)-5,10-methenyltetrahydrofolate + NADPH. It catalyses the reaction (6R)-5,10-methenyltetrahydrofolate + H2O = (6R)-10-formyltetrahydrofolate + H(+). The protein operates within one-carbon metabolism; tetrahydrofolate interconversion. Catalyzes the oxidation of 5,10-methylenetetrahydrofolate to 5,10-methenyltetrahydrofolate and then the hydrolysis of 5,10-methenyltetrahydrofolate to 10-formyltetrahydrofolate. This is Bifunctional protein FolD from Escherichia coli (strain UTI89 / UPEC).